The chain runs to 325 residues: Eukaryotic translation initiation factor 3 subunit I (325 aa).

5 WD repeats span residues 8 to 47 (GHER…RLGT), 50 to 89 (GHTG…QLAL), 144 to 183 (CSDS…QLSN), 186 to 225 (EHTK…HLKT), and 283 to 324 (GHFG…FEFE).

It belongs to the eIF-3 subunit I family. Component of the eukaryotic translation initiation factor 3 (eIF-3) complex, which is composed of 13 subunits: EIF3A, EIF3B, EIF3C, EIF3D, EIF3E, EIF3F, EIF3G, EIF3H, EIF3I, EIF3J, EIF3K, EIF3L and EIF3M.

It localises to the cytoplasm. In terms of biological role, component of the eukaryotic translation initiation factor 3 (eIF-3) complex, which is involved in protein synthesis of a specialized repertoire of mRNAs and, together with other initiation factors, stimulates binding of mRNA and methionyl-tRNAi to the 40S ribosome. The eIF-3 complex specifically targets and initiates translation of a subset of mRNAs involved in cell proliferation. This Taeniopygia guttata (Zebra finch) protein is Eukaryotic translation initiation factor 3 subunit I.